A 119-amino-acid chain; its full sequence is MEFDPASLRYDDQGLIPAIAQDAASGEVLMMAWMNAEAVARTLETGRVTYWSRSRQAFWIKGESSGHVQTLVEMRVDCDRDCLLLQVRQEGPACHTNRRTCFYTAIRDGAEVELMAPMV.

A Mg(2+)-binding site is contributed by Asp-77. Cys-78 is a Zn(2+) binding site. The Mg(2+) site is built by Asp-79 and Asp-81. Residues Cys-94 and Cys-101 each contribute to the Zn(2+) site.

Belongs to the PRA-CH family. In terms of assembly, homodimer. Requires Mg(2+) as cofactor. Zn(2+) is required as a cofactor.

It localises to the cytoplasm. The enzyme catalyses 1-(5-phospho-beta-D-ribosyl)-5'-AMP + H2O = 1-(5-phospho-beta-D-ribosyl)-5-[(5-phospho-beta-D-ribosylamino)methylideneamino]imidazole-4-carboxamide. The protein operates within amino-acid biosynthesis; L-histidine biosynthesis; L-histidine from 5-phospho-alpha-D-ribose 1-diphosphate: step 3/9. In terms of biological role, catalyzes the hydrolysis of the adenine ring of phosphoribosyl-AMP. In Dinoroseobacter shibae (strain DSM 16493 / NCIMB 14021 / DFL 12), this protein is Phosphoribosyl-AMP cyclohydrolase.